Here is a 250-residue protein sequence, read N- to C-terminus: 5'-nucleotidase SurE (250 aa).

Residues Asp8, Asp9, Ser40, and Asn92 each contribute to the a divalent metal cation site.

The protein belongs to the SurE nucleotidase family. Requires a divalent metal cation as cofactor.

The protein resides in the cytoplasm. It carries out the reaction a ribonucleoside 5'-phosphate + H2O = a ribonucleoside + phosphate. Functionally, nucleotidase that shows phosphatase activity on nucleoside 5'-monophosphates. The protein is 5'-nucleotidase SurE of Dichelobacter nodosus (strain VCS1703A).